The primary structure comprises 548 residues: Chaperonin GroEL (548 aa).

Residues Thr30–Pro33, Lys51, Asp87–Thr91, Gly415, and Asp496 each bind ATP.

It belongs to the chaperonin (HSP60) family. In terms of assembly, forms a cylinder of 14 subunits composed of two heptameric rings stacked back-to-back. Interacts with the co-chaperonin GroES.

The protein resides in the cytoplasm. The enzyme catalyses ATP + H2O + a folded polypeptide = ADP + phosphate + an unfolded polypeptide.. In terms of biological role, together with its co-chaperonin GroES, plays an essential role in assisting protein folding. The GroEL-GroES system forms a nano-cage that allows encapsulation of the non-native substrate proteins and provides a physical environment optimized to promote and accelerate protein folding. This is Chaperonin GroEL from Haemophilus influenzae (strain ATCC 51907 / DSM 11121 / KW20 / Rd).